We begin with the raw amino-acid sequence, 329 residues long: UDP-N-acetylenolpyruvoylglucosamine reductase (329 aa).

Residues 28–192 (RVGGPADLLC…ARVEVRLHPG (165 aa)) enclose the FAD-binding PCMH-type domain. The active site involves R172. S221 (proton donor) is an active-site residue. Residue E291 is part of the active site. A disordered region spans residues 307-329 (DGHAAAGGGPGAASGGVRPPEAT). Positions 311-320 (AAGGGPGAAS) are enriched in gly residues.

The protein belongs to the MurB family. It depends on FAD as a cofactor.

It is found in the cytoplasm. The catalysed reaction is UDP-N-acetyl-alpha-D-muramate + NADP(+) = UDP-N-acetyl-3-O-(1-carboxyvinyl)-alpha-D-glucosamine + NADPH + H(+). The protein operates within cell wall biogenesis; peptidoglycan biosynthesis. Cell wall formation. This Anaeromyxobacter dehalogenans (strain 2CP-1 / ATCC BAA-258) protein is UDP-N-acetylenolpyruvoylglucosamine reductase.